Reading from the N-terminus, the 457-residue chain is Cell division cycle 20.1, cofactor of APC complex (457 aa).

WD repeat units follow at residues 138 to 175 (VDDF…TSEL), 180 to 219 (EEKG…QLRT), 223 to 260 (GHQS…PIVE), 264 to 303 (GHTQ…SNST), 312 to 354 (EHTS…CLNS), 356 to 397 (DTGS…KMAE), and 400 to 439 (GHTS…ETAK).

This sequence belongs to the WD repeat CDC20/Fizzy family. The APC/C is composed of at least 11 subunits that stay tightly associated throughout the cell cycle. Interacts with APC10, FZR1, FZR2, FZR3. Binds to GIG1 and PYM. Part of the mitotic checkpoint complex (MCC); interacts with MAD2, BUB3.1, BUBR1 and BUB1. Binds to cyclins CYCA1-2, CYCB2-1 and CYCB2-2. Interacts with PANS1. As to expression, expressed in meristems and organ primordia. Present in flowers, leaves, stems, roots, pollen grains and developing seeds.

The protein resides in the nucleus. It functions in the pathway protein modification; protein ubiquitination. Its function is as follows. Component of the anaphase promoting complex/cyclosome (APC/C), a cell cycle-regulated E3 ubiquitin-protein ligase complex that controls progression through mitosis and the G1 phase of the cell cycle. The chain is Cell division cycle 20.1, cofactor of APC complex (CDC20-1) from Arabidopsis thaliana (Mouse-ear cress).